The following is a 209-amino-acid chain: MKRQHLTARQQEIFEFVKNHIESTGMPPTRVEIAREIGFKSPNAAEEHLKALARKGYIEMLSGTSRGIRILVEDEAANDEEGLPLIGKVAAGTPIEAIEHIEKHYPVNGAMFSPAADYLLKVNGNSMEKIGILDGDLLAVHKTKSVRNGQVVVARVDDEVTVKRLEKKGDLIYLHPENDELEPIVVDPRQSYIEIEGIAVGVIRSNAWM.

A DNA-binding region (H-T-H motif) is located at residues 30–50; sequence RVEIAREIGFKSPNAAEEHLK. Active-site for autocatalytic cleavage activity residues include Ser126 and Lys163.

The protein belongs to the peptidase S24 family. In terms of assembly, homodimer.

It catalyses the reaction Hydrolysis of Ala-|-Gly bond in repressor LexA.. Its function is as follows. Represses a number of genes involved in the response to DNA damage (SOS response), including recA and lexA. In the presence of single-stranded DNA, RecA interacts with LexA causing an autocatalytic cleavage which disrupts the DNA-binding part of LexA, leading to derepression of the SOS regulon and eventually DNA repair. The chain is LexA repressor from Glaesserella parasuis serovar 5 (strain SH0165) (Haemophilus parasuis).